Reading from the N-terminus, the 233-residue chain is Orotidine 5'-phosphate decarboxylase (233 aa).

Substrate is bound by residues Asp13, Lys35, 62–71 (DLKFHDIPNT), Thr122, Arg182, Gln191, Gly211, and Arg212. Lys64 serves as the catalytic Proton donor.

This sequence belongs to the OMP decarboxylase family. Type 1 subfamily. As to quaternary structure, homodimer.

The catalysed reaction is orotidine 5'-phosphate + H(+) = UMP + CO2. It functions in the pathway pyrimidine metabolism; UMP biosynthesis via de novo pathway; UMP from orotate: step 2/2. Catalyzes the decarboxylation of orotidine 5'-monophosphate (OMP) to uridine 5'-monophosphate (UMP). This Pseudomonas putida (strain W619) protein is Orotidine 5'-phosphate decarboxylase.